A 569-amino-acid chain; its full sequence is Urease subunit alpha (569 aa).

The region spanning 131–569 is the Urease domain; that stretch reads GGIDTHIHFI…LPMAQRYFLL (439 aa). Residues His136, His138, and Lys219 each contribute to the Ni(2+) site. N6-carboxylysine is present on Lys219. Residue His221 participates in substrate binding. Residues His248 and His274 each coordinate Ni(2+). Residue His322 is the Proton donor of the active site. Asp362 is a binding site for Ni(2+).

The protein belongs to the metallo-dependent hydrolases superfamily. Urease alpha subunit family. As to quaternary structure, heterotrimer of UreA (gamma), UreB (beta) and UreC (alpha) subunits. Three heterotrimers associate to form the active enzyme. Ni cation is required as a cofactor. Carboxylation allows a single lysine to coordinate two nickel ions.

Its subcellular location is the cytoplasm. It carries out the reaction urea + 2 H2O + H(+) = hydrogencarbonate + 2 NH4(+). The protein operates within nitrogen metabolism; urea degradation; CO(2) and NH(3) from urea (urease route): step 1/1. The chain is Urease subunit alpha from Synechococcus sp. (strain RCC307).